The chain runs to 535 residues: UDP-glucuronosyltransferase 1A1 (535 aa).

An N-terminal signal peptide occupies residues Met1–Ala29. Residues Asn89, Asn297, and Asn435 are each glycosylated (N-linked (GlcNAc...) asparagine). Residues Val493–Tyr509 traverse the membrane as a helical segment.

Belongs to the UDP-glycosyltransferase family. Homodimers. Homooligomer. Interacts with UGT1A3, UGT1A4, UGT1A6, UGT1A7, UGT1A8, UGT1A9 and UGT1A10 to form heterodimers.

It is found in the endoplasmic reticulum membrane. It catalyses the reaction glucuronate acceptor + UDP-alpha-D-glucuronate = acceptor beta-D-glucuronoside + UDP + H(+). The catalysed reaction is 17beta-estradiol + UDP-alpha-D-glucuronate = 17beta-estradiol 3-O-(beta-D-glucuronate) + UDP + H(+). The enzyme catalyses 2-hydroxyestrone + UDP-alpha-D-glucuronate = 2-hydroxyestrone 3-O-(beta-D-glucuronate) + UDP + H(+). It carries out the reaction 2-hydroxy-17beta-estradiol + UDP-alpha-D-glucuronate = 2-hydroxy-17beta-estradiol 3-O-(beta-D-glucuronate) + UDP + H(+). It catalyses the reaction 2-methoxy-17beta-estradiol + UDP-alpha-D-glucuronate = 2-methoxy-17beta-estradiol 3-O-(beta-D-glucuronate) + UDP + H(+). The catalysed reaction is 17alpha-estradiol + UDP-alpha-D-glucuronate = 17alpha-estradiol 3-O-(beta-D-glucuronate) + UDP + H(+). The enzyme catalyses 16beta,17beta-estriol + UDP-alpha-D-glucuronate = 16beta,17beta-estriol 16-O-(beta-D-glucuronate) + UDP + H(+). It carries out the reaction losartan + UDP-alpha-D-glucuronate = losartan-2-N-beta-D-glucuronide + UDP. It catalyses the reaction prunetin + UDP-alpha-D-glucuronate = prunetin-4'-O-beta-D-glucuronide + UDP. The catalysed reaction is SN-38 + UDP-alpha-D-glucuronate = SN-38 O-beta-D-glucuronide + UDP + H(+). The enzyme catalyses (4Z,15Z)-bilirubin IXalpha + UDP-alpha-D-glucuronate = (4Z,15Z)-bilirubin IXalpha C12-beta-D-glucuronoside + UDP. It carries out the reaction (4Z,15Z)-bilirubin IXalpha + UDP-alpha-D-glucuronate = (4Z,15Z)-bilirubin IXalpha C8-beta-D-glucuronoside + UDP. It catalyses the reaction (4Z,15Z)-bilirubin IXalpha C8-beta-D-glucuronoside + UDP-alpha-D-glucuronate = (4Z,15Z)-bilirubin IXalpha C8,C12-beta-D-bisglucuronoside + UDP. The catalysed reaction is (4Z,15Z)-bilirubin IXalpha C12-beta-D-glucuronoside + UDP-alpha-D-glucuronate = (4Z,15Z)-bilirubin IXalpha C8,C12-beta-D-bisglucuronoside + UDP. The enzyme catalyses 8-iso-prostaglandin F2alpha + UDP-alpha-D-glucuronate = 8-iso-prostaglandin F2alpha-glucuronide + UDP + H(+). It carries out the reaction (5Z,8Z,11Z,14Z)-eicosatetraenoate + UDP-alpha-D-glucuronate = O-[(5Z),(8Z),(11Z),(14Z)-eicosatetraenoyl]-beta-D-glucuronate + UDP. It catalyses the reaction 15-hydroxy-(5Z,8Z,11Z,13E)-eicosatetraenoate + UDP-alpha-D-glucuronate = 15-O-(beta-D-glucuronosyl)-(5Z,8Z,11Z,14Z)-eicosatetraenoate + UDP + H(+). The catalysed reaction is 20-hydroxy-(5Z,8Z,11Z,14Z)-eicosatetraenoate + UDP-alpha-D-glucuronate = 20-O-(beta-D-glucuronosyl)-(5Z,8Z,11Z,14Z)-eicosatetraenoate + UDP + H(+). The enzyme catalyses prostaglandin B1 + UDP-alpha-D-glucuronate = 15-O-(beta-D-glucuronosyl)-prostaglandin B1 + UDP + H(+). It carries out the reaction (E)-ferulate + UDP-alpha-D-glucuronate = (E)-4-O-(beta-D-glucuronosyl)-ferulate + UDP + H(+). It catalyses the reaction (E)-ferulate + UDP-alpha-D-glucuronate = (E)-ferulic acid beta-D-glucuronate ester + UDP. Its function is as follows. UDP-glucuronosyltransferase (UGT) that catalyzes phase II biotransformation reactions in which lipophilic substrates are conjugated with glucuronic acid to increase the metabolite's water solubility, thereby facilitating excretion into either the urine or bile. Essential for the elimination and detoxification of drugs, xenobiotics and endogenous compounds. Catalyzes the glucuronidation of endogenous estrogen hormones such as estradiol, estrone and estriol. Involved in the glucuronidation of bilirubin, a degradation product occurring in the normal catabolic pathway that breaks down heme in vertebrates. Involved in the glucuronidation of arachidonic acid (AA) and AA-derived eicosanoids including 15-HETE, 20-HETE, PGB1 and F2-isoprostane (8-iso-PGF2alpha). Involved in the glucuronidation of the phytochemical ferulic acid at the phenolic or the carboxylic acid group. Also catalyzes the glucuronidation the isoflavones genistein, daidzein, glycitein, formononetin, biochanin A and prunetin, which are phytoestrogens with anticancer and cardiovascular properties. Involved in the glucuronidation of the AGTR1 angiotensin receptor antagonist losartan, a drug which can inhibit the effect of angiotensin II. Involved in the biotransformation of 7-ethyl-10-hydroxycamptothecin (SN-38), the pharmacologically active metabolite of the anticancer drug irinotecan. The polypeptide is UDP-glucuronosyltransferase 1A1 (Rattus norvegicus (Rat)).